The primary structure comprises 260 residues: Carbonic anhydrase 3 (260 aa).

Position 2 is an N-acetylalanine (A2). Residues K3 to F259 enclose the Alpha-carbonic anhydrase domain. A phosphoserine mark is found at S29, S43, S48, S50, and S55. Positions K64–R67 are involved in proton transfer. Phosphothreonine is present on T73. Positions 94, 96, and 119 each coordinate Zn(2+). Position 127 is a phosphotyrosine (Y127). At T129 the chain carries Phosphothreonine. S-glutathionyl cysteine is present on residues C182 and C187. T198–T199 contributes to the substrate binding site. T216 bears the Phosphothreonine mark. The residue at position 219 (S219) is a Phosphoserine.

Belongs to the alpha-carbonic anhydrase family. The cofactor is Zn(2+). Post-translationally, S-thiolated both by thiol-disulfide exchange with glutathione disulfide and by oxyradical-initiated S-thiolation with reduced glutathione. In terms of processing, S-glutathionylated in hepatocytes under oxidative stress. In terms of tissue distribution, expressed in liver and muscle.

It localises to the cytoplasm. The enzyme catalyses hydrogencarbonate + H(+) = CO2 + H2O. Inhibited by acetazolamide. Reversible hydration of carbon dioxide. The sequence is that of Carbonic anhydrase 3 (Ca3) from Rattus norvegicus (Rat).